A 122-amino-acid chain; its full sequence is Basic phospholipase A2 LmTX-II (122 aa).

6 disulfides stabilise this stretch: cysteine 26–cysteine 115, cysteine 28–cysteine 44, cysteine 43–cysteine 95, cysteine 49–cysteine 122, cysteine 50–cysteine 88, and cysteine 75–cysteine 86. Positions 27, 29, and 31 each coordinate Ca(2+). Histidine 47 is an active-site residue. Aspartate 48 contributes to the Ca(2+) binding site. Residue aspartate 89 is part of the active site.

In terms of assembly, monomer. Ca(2+) is required as a cofactor. Expressed by the venom gland.

It localises to the secreted. The enzyme catalyses a 1,2-diacyl-sn-glycero-3-phosphocholine + H2O = a 1-acyl-sn-glycero-3-phosphocholine + a fatty acid + H(+). In terms of biological role, snake venom phospholipase A2 (PLA2) that may display neurotoxic and myotoxic activities. May induce inflammatory edema by mechanisms involving mast cell activation and arachidonic acid metabolites. May increase plasma creatine kinase activity. PLA2 catalyzes the calcium-dependent hydrolysis of the 2-acyl groups in 3-sn-phosphoglycerides. This is Basic phospholipase A2 LmTX-II from Lachesis muta muta (Bushmaster).